Reading from the N-terminus, the 396-residue chain is Tyrosine--tRNA ligase (396 aa).

The 'HIGH' region motif lies at 42–51 (PTAPDIHLGH). Residues 226–230 (KMSKS) carry the 'KMSKS' region motif. Residue Lys-229 coordinates ATP. Residues 334-395 (LPIANLLKEA…GKRKFAKIII (62 aa)) form the S4 RNA-binding domain.

The protein belongs to the class-I aminoacyl-tRNA synthetase family. TyrS type 2 subfamily. As to quaternary structure, homodimer.

Its subcellular location is the cytoplasm. The catalysed reaction is tRNA(Tyr) + L-tyrosine + ATP = L-tyrosyl-tRNA(Tyr) + AMP + diphosphate + H(+). Catalyzes the attachment of tyrosine to tRNA(Tyr) in a two-step reaction: tyrosine is first activated by ATP to form Tyr-AMP and then transferred to the acceptor end of tRNA(Tyr). This chain is Tyrosine--tRNA ligase, found in Francisella tularensis subsp. tularensis (strain SCHU S4 / Schu 4).